A 91-amino-acid polypeptide reads, in one-letter code: Proline, histidine and glycine-rich protein 1 (91 aa).

The disordered stretch occupies residues Met-1–His-91. 3 stretches are compositionally biased toward gly residues: residues His-33–Pro-42, Gly-49–Pro-63, and Gly-70–His-82.

The protein is Proline, histidine and glycine-rich protein 1 (Phgr1) of Mus musculus (Mouse).